The primary structure comprises 276 residues: Putative phosphoenolpyruvate synthase regulatory protein (276 aa).

ADP is bound at residue 156–163 (GVSRSGKT).

The protein belongs to the pyruvate, phosphate/water dikinase regulatory protein family. PSRP subfamily.

It carries out the reaction [pyruvate, water dikinase] + ADP = [pyruvate, water dikinase]-phosphate + AMP + H(+). The enzyme catalyses [pyruvate, water dikinase]-phosphate + phosphate + H(+) = [pyruvate, water dikinase] + diphosphate. In terms of biological role, bifunctional serine/threonine kinase and phosphorylase involved in the regulation of the phosphoenolpyruvate synthase (PEPS) by catalyzing its phosphorylation/dephosphorylation. The polypeptide is Putative phosphoenolpyruvate synthase regulatory protein (Acidovorax ebreus (strain TPSY) (Diaphorobacter sp. (strain TPSY))).